The chain runs to 213 residues: uncharacterized protein (213 aa).

Positions 53, 74, and 97 each coordinate S-adenosyl-L-methionine.

It belongs to the methyltransferase superfamily. YrrT family.

In terms of biological role, could be a S-adenosyl-L-methionine-dependent methyltransferase. This is an uncharacterized protein from Geobacillus sp. (strain WCH70).